Reading from the N-terminus, the 180-residue chain is MSILADTEKKMAAALEFFTKEVRSFRTGKANPALVETVTVDVYGTTMRLSDLASISVADTRQLVISPYDANNVSAISKGIIAANLNLQPDVEGSIVRIKIPEPTAEYRNEVIKQLRRKSEEAKVAIRNIRRESNDKLKKDSDLTEDAVKGMEKKIQELTDKFCKQIDKMSKQKEVDLSSI.

The protein belongs to the RRF family.

Its subcellular location is the cytoplasm. Its function is as follows. Responsible for the release of ribosomes from messenger RNA at the termination of protein biosynthesis. May increase the efficiency of translation by recycling ribosomes from one round of translation to another. This chain is Ribosome-recycling factor, found in Chlamydia abortus (strain DSM 27085 / S26/3) (Chlamydophila abortus).